Consider the following 213-residue polypeptide: Pyrrolidone-carboxylate peptidase (213 aa).

Residues Glu-78, Cys-141, and His-165 contribute to the active site.

This sequence belongs to the peptidase C15 family. As to quaternary structure, homotetramer.

It is found in the cytoplasm. The catalysed reaction is Release of an N-terminal pyroglutamyl group from a polypeptide, the second amino acid generally not being Pro.. Removes 5-oxoproline from various penultimate amino acid residues except L-proline. The protein is Pyrrolidone-carboxylate peptidase of Alkaliphilus oremlandii (strain OhILAs) (Clostridium oremlandii (strain OhILAs)).